The primary structure comprises 283 residues: Ribosomal RNA small subunit methyltransferase A (283 aa).

Asn22, Leu24, Gly49, Glu70, and Asn113 together coordinate S-adenosyl-L-methionine.

It belongs to the class I-like SAM-binding methyltransferase superfamily. rRNA adenine N(6)-methyltransferase family. RsmA subfamily.

The protein localises to the cytoplasm. The catalysed reaction is adenosine(1518)/adenosine(1519) in 16S rRNA + 4 S-adenosyl-L-methionine = N(6)-dimethyladenosine(1518)/N(6)-dimethyladenosine(1519) in 16S rRNA + 4 S-adenosyl-L-homocysteine + 4 H(+). In terms of biological role, specifically dimethylates two adjacent adenosines (A1518 and A1519) in the loop of a conserved hairpin near the 3'-end of 16S rRNA in the 30S particle. May play a critical role in biogenesis of 30S subunits. The polypeptide is Ribosomal RNA small subunit methyltransferase A (Myxococcus xanthus (strain DK1622)).